Consider the following 798-residue polypeptide: Peroxisome proliferator-activated receptor gamma coactivator 1-alpha (798 aa).

Lys-79 is subject to N6-acetyllysine. Residues 100 to 140 (PVDEDGLPSFDALTDGDVTTDNEASPSSMPDGTPPPQEAEE) are disordered. Residues 116–129 (DVTTDNEASPSSMP) show a composition bias toward polar residues. The LXXLL motif signature appears at 144–148 (LKKLL). At Lys-146 the chain carries N6-acetyllysine. The residue at position 178 (Thr-178) is a Phosphothreonine; by AMPK. Position 184 is an N6-acetyllysine (Lys-184). Positions 213–277 (YLTTNDDPPH…NDPKGSPFEN (65 aa)) are disordered. Basic and acidic residues predominate over residues 219-237 (DPPHTKPTENRNSSRDKCT). Lys-254, Lys-271, Lys-278, and Lys-321 each carry N6-acetyllysine. The tract at residues 290 to 351 (GTAGLTPPTT…NNSTKKGPEQ (62 aa)) is disordered. Positions 293–339 (GLTPPTTPPHKANQDNPFRASPKLKSSCKTVVPPPSKKPRYSESSGT) are interaction with PPARG. A compositionally biased stretch (polar residues) spans 334-346 (SESSGTQGNNSTK). N6-acetyllysine is present on residues Lys-347, Lys-413, Lys-442, and Lys-451. The segment at 350 to 798 (EQSELYAQLS…LKEAQRSLRR (449 aa)) is mediates interaction with RNF34. Phosphoserine; by AMPK is present on Ser-539. Disordered regions lie at residues 542–599 (SFNS…SSRS), 613–639 (HRNS…SYEE), and 650–669 (YRRE…ERQR). The segment covering 563 to 578 (QRMRSRSRSFSRHRSC) has biased composition (basic residues). A compositionally biased stretch (low complexity) spans 579–599 (SRSPYSRSRSRSPGSRSSSRS). Positions 622 to 631 (SRSRSPYSRR) are enriched in basic residues. The RRM domain occupies 677–753 (RVIYVGKIRP…TDFELYFCGR (77 aa)). N6-acetyllysine is present on residues Lys-758 and Lys-779.

As to quaternary structure, homooligomer. Interacts with MYBBP1A; inhibits MYBBP1A transcriptional activation. Interacts with PRDM16, LPIN1 and PML. Interacts (via LXXLL motif) with RORA and RORC (via AF-2 motif); activates RORA and RORC transcriptional activation. Interacts with LRPPRC. Interacts with FOXO1. Interacts with NR5A2. In terms of processing, phosphorylation by AMPK in skeletal muscle increases activation of its own promoter. Phosphorylated by CLK2. Heavily acetylated by KAT2A/GCN5 under conditions of high nutrients, leading to inactivation of PPARGC1A. Deacetylated by SIRT1 in low nutrients/high NAD conditions, leading to its activation. Post-translationally, ubiquitinated. Ubiquitination by RNF34 induces proteasomal degradation. In terms of tissue distribution, heart, skeletal muscle, liver and kidney. Expressed at lower levels in brain and pancreas and at very low levels in the intestine and white adipose tissue. In skeletal muscle, levels were lower in obese than in lean subjects and fasting induced a 2-fold increase in levels in the skeletal muscle in obese subjects.

It is found in the nucleus. The protein resides in the PML body. It localises to the cytoplasm. In terms of biological role, transcriptional coactivator for steroid receptors and nuclear receptors. Greatly increases the transcriptional activity of PPARG and thyroid hormone receptor on the uncoupling protein promoter. Can regulate key mitochondrial genes that contribute to the program of adaptive thermogenesis. Plays an essential role in metabolic reprogramming in response to dietary availability through coordination of the expression of a wide array of genes involved in glucose and fatty acid metabolism. Acts as a key regulator of gluconeogenesis: stimulates hepatic gluconeogenesis by increasing the expression of gluconeogenic enzymes, and acting together with FOXO1 to promote the fasting gluconeogenic program. Induces the expression of PERM1 in the skeletal muscle in an ESRRA-dependent manner. Also involved in the integration of the circadian rhythms and energy metabolism. Required for oscillatory expression of clock genes, such as BMAL1 and NR1D1, through the coactivation of RORA and RORC, and metabolic genes, such as PDK4 and PEPCK. This chain is Peroxisome proliferator-activated receptor gamma coactivator 1-alpha (PPARGC1A), found in Homo sapiens (Human).